The sequence spans 83 residues: Cytochrome b559 subunit alpha (83 aa).

Residues 21 to 35 traverse the membrane as a helical segment; that stretch reads VIHSITIPSLFIAGW. His-23 is a heme binding site.

The protein belongs to the PsbE/PsbF family. Heterodimer of an alpha subunit and a beta subunit. PSII is composed of 1 copy each of membrane proteins PsbA, PsbB, PsbC, PsbD, PsbE, PsbF, PsbH, PsbI, PsbJ, PsbK, PsbL, PsbM, PsbT, PsbX, PsbY, PsbZ, Psb30/Ycf12, at least 3 peripheral proteins of the oxygen-evolving complex and a large number of cofactors. It forms dimeric complexes. The cofactor is heme b.

It localises to the plastid membrane. Its function is as follows. This b-type cytochrome is tightly associated with the reaction center of photosystem II (PSII). PSII is a light-driven water:plastoquinone oxidoreductase that uses light energy to abstract electrons from H(2)O, generating O(2) and a proton gradient subsequently used for ATP formation. It consists of a core antenna complex that captures photons, and an electron transfer chain that converts photonic excitation into a charge separation. This Cuscuta reflexa (Southern Asian dodder) protein is Cytochrome b559 subunit alpha.